The chain runs to 119 residues: MARVLNIEIPNNKKARISLTYIFGIGPTIAKQILADANVDGEKRVKELTEEELTRIRDEAKKYTTEGDLKREINLNIKRLMEIKSYRVIRHRKDTCKRSTKKNARTRKGPKKDNRWKER.

The segment covering 92–110 (RKDTCKRSTKKNARTRKGP) has biased composition (basic residues). Residues 92-119 (RKDTCKRSTKKNARTRKGPKKDNRWKER) are disordered.

It belongs to the universal ribosomal protein uS13 family. In terms of assembly, part of the 30S ribosomal subunit. Forms a loose heterodimer with protein S19. Forms two bridges to the 50S subunit in the 70S ribosome.

Located at the top of the head of the 30S subunit, it contacts several helices of the 16S rRNA. In the 70S ribosome it contacts the 23S rRNA (bridge B1a) and protein L5 of the 50S subunit (bridge B1b), connecting the 2 subunits; these bridges are implicated in subunit movement. Contacts the tRNAs in the A and P-sites. The sequence is that of Small ribosomal subunit protein uS13 from Mycoplasma sp.